Consider the following 259-residue polypeptide: Transmembrane protein 81 (259 aa).

The first 18 residues, 1–18 (MALSTLWLVLMLWTSLFS), serve as a signal peptide directing secretion. At 19-221 (DSQCSTLSQA…KVYSSSTIRN (203 aa)) the chain is on the extracellular side. The Ig-like domain occupies 97–172 (GRRLVLDCLE…VLDTGKRRVK (76 aa)). Cys104 and Cys161 are joined by a disulfide. Residues 222 to 242 (IVIISVPLSFAIAVVIFIFLF) form a helical membrane-spanning segment. Over 243 to 259 (CYSRRARRAAHLCQDNI) the chain is Cytoplasmic.

As to quaternary structure, forms a complex with izumo1 and spaca6 on spermatocyte cell membrane. The complex binds to oocyte protein bncr. In terms of tissue distribution, expressed in sperm.

The protein localises to the cell membrane. Essential fertilization factor required for male fertility. Part of a conserved trimeric sperm complex with the essential fertilization factors IZUMO1 and SPACA6 which bridges sperm and oocyte membranes during fertilization by binding to IZUMO1R/JUNO on the oocyte. The sequence is that of Transmembrane protein 81 from Danio rerio (Zebrafish).